Consider the following 208-residue polypeptide: 3-demethoxyubiquinol 3-hydroxylase (208 aa).

Fe cation is bound by residues Glu57, Glu87, His90, Glu139, Glu171, and His174.

It belongs to the COQ7 family. Requires Fe cation as cofactor.

It localises to the cell membrane. The catalysed reaction is a 5-methoxy-2-methyl-3-(all-trans-polyprenyl)benzene-1,4-diol + AH2 + O2 = a 3-demethylubiquinol + A + H2O. Its pathway is cofactor biosynthesis; ubiquinone biosynthesis. Functionally, catalyzes the hydroxylation of 2-nonaprenyl-3-methyl-6-methoxy-1,4-benzoquinol during ubiquinone biosynthesis. The polypeptide is 3-demethoxyubiquinol 3-hydroxylase (Burkholderia thailandensis (strain ATCC 700388 / DSM 13276 / CCUG 48851 / CIP 106301 / E264)).